The following is a 113-amino-acid chain: Small ribosomal subunit protein uS17 (113 aa).

Belongs to the universal ribosomal protein uS17 family. Part of the 30S ribosomal subunit.

Its function is as follows. One of the primary rRNA binding proteins, it binds specifically to the 5'-end of 16S ribosomal RNA. The chain is Small ribosomal subunit protein uS17 from Nanoarchaeum equitans (strain Kin4-M).